A 354-amino-acid chain; its full sequence is DNA replication and repair protein RecF (354 aa).

30 to 37 serves as a coordination point for ATP; that stretch reads GDNGSGKT.

Belongs to the RecF family.

It localises to the cytoplasm. The RecF protein is involved in DNA metabolism; it is required for DNA replication and normal SOS inducibility. RecF binds preferentially to single-stranded, linear DNA. It also seems to bind ATP. This chain is DNA replication and repair protein RecF, found in Idiomarina loihiensis (strain ATCC BAA-735 / DSM 15497 / L2-TR).